Here is a 341-residue protein sequence, read N- to C-terminus: UDP-3-O-acylglucosamine N-acyltransferase (341 aa).

His-239 acts as the Proton acceptor in catalysis.

This sequence belongs to the transferase hexapeptide repeat family. LpxD subfamily. In terms of assembly, homotrimer.

The catalysed reaction is a UDP-3-O-[(3R)-3-hydroxyacyl]-alpha-D-glucosamine + a (3R)-hydroxyacyl-[ACP] = a UDP-2-N,3-O-bis[(3R)-3-hydroxyacyl]-alpha-D-glucosamine + holo-[ACP] + H(+). The protein operates within bacterial outer membrane biogenesis; LPS lipid A biosynthesis. Functionally, catalyzes the N-acylation of UDP-3-O-acylglucosamine using 3-hydroxyacyl-ACP as the acyl donor. Is involved in the biosynthesis of lipid A, a phosphorylated glycolipid that anchors the lipopolysaccharide to the outer membrane of the cell. This is UDP-3-O-acylglucosamine N-acyltransferase from Shewanella sp. (strain MR-4).